We begin with the raw amino-acid sequence, 363 residues long: Probable endopolygalacturonase A (363 aa).

A signal peptide spans 1–20 (MQLLQSSVIAATVGAALVAA). Positions 21-28 (APVELEAR) are excised as a propeptide. An intrachain disulfide couples C31 to C46. PbH1 repeat units lie at residues 158–187 (SDNL…DIGS), 188–209 (STYI…AINS), 210–230 (GSHI…SIGS), 239–260 (VEDV…RIKT), 268–290 (VSNV…VVEQ), and 302–347 (TNGI…SITG). N-linked (GlcNAc...) asparagine glycosylation is present at N162. D202 acts as the Proton donor in catalysis. C204 and C220 are disulfide-bonded. The active site involves H224. 2 disulfide bridges follow: C330–C335 and C354–C363.

This sequence belongs to the glycosyl hydrolase 28 family.

It localises to the secreted. The catalysed reaction is (1,4-alpha-D-galacturonosyl)n+m + H2O = (1,4-alpha-D-galacturonosyl)n + (1,4-alpha-D-galacturonosyl)m.. In terms of biological role, involved in maceration and soft-rotting of plant tissue. Hydrolyzes the 1,4-alpha glycosidic bonds of de-esterified pectate in the smooth region of the plant cell wall. The chain is Probable endopolygalacturonase A (pgaA) from Aspergillus parasiticus.